The following is a 287-amino-acid chain: Pyridoxal kinase PdxY (287 aa).

Residues Ser-10 and 45 to 46 (TQ) contribute to the substrate site. ATP-binding positions include Asp-112, Ala-144, Glu-149, Lys-182, and 209-212 (RPLV). Position 224 (Asp-224) interacts with substrate.

Belongs to the pyridoxine kinase family. PdxY subfamily. As to quaternary structure, homodimer. The cofactor is Mg(2+).

It carries out the reaction pyridoxal + ATP = pyridoxal 5'-phosphate + ADP + H(+). The protein operates within cofactor metabolism; pyridoxal 5'-phosphate salvage; pyridoxal 5'-phosphate from pyridoxal: step 1/1. Pyridoxal kinase involved in the salvage pathway of pyridoxal 5'-phosphate (PLP). Catalyzes the phosphorylation of pyridoxal to PLP. This Shigella sonnei (strain Ss046) protein is Pyridoxal kinase PdxY.